The sequence spans 703 residues: Probable ATP-dependent RNA helicase vasa-like (703 aa).

3 disordered regions span residues 1–22, 35–73, and 88–167; these read MSDDWDETDAAPASDWNIESFG, NTGNAFNDGEGGFDEGSQSNFDDPFRSGGGGFGGRGRGG, and RDCP…RGCF. Residues 61–73 show a composition bias toward gly residues; the sequence is SGGGGFGGRGRGG. The segment at 77–92 adopts a CCHC-type 1 zinc-finger fold; sequence CFKCGDEGHMARDCPS. The span at 146-155 shows a compositional bias: gly residues; the sequence is FGFGSGSGSR. 2 consecutive CCHC-type zinc fingers follow at residues 166-181 and 189-204; these read CFKCGEEGHMSRDCPS and CFKCGQEGHNARDCPN. A Q motif motif is present at residues 261-289; sequence ESFQSMNLRPLLLENIVKAGYGCPTPVQK. Positions 292-475 constitute a Helicase ATP-binding domain; that stretch reads IPNVMNGRDI…SAFLNNYLFV (184 aa). ATP is bound at residue 305–312; sequence AQTGSGKT. Positions 419-422 match the DEAD box motif; it reads DEAD. Positions 506 to 651 constitute a Helicase C-terminal domain; the sequence is MCEEILISAD…TIPDWLTQKA (146 aa). A disordered region spans residues 676–703; sequence GGGRGWEKNQASSFLGGPSESNVDEEWD.

The protein belongs to the DEAD box helicase family. DDX4/VASA subfamily. As to expression, expressed in ovaries and testis. Not expressed in somatic tissue of the ovaries including follicle cells, muscle and connective tissue.

It localises to the cytoplasm. The protein resides in the nucleus. Its subcellular location is the nucleolus. The catalysed reaction is ATP + H2O = ADP + phosphate + H(+). Functionally, involved in translational control mechanisms operating in early stages of oogenesis. Required maternally in many stages of oogenesis, including cystocyte differentiation, oocyte differentiation, and specification of anterior-posterior polarity in the developing cysts. Essential for the formation and/or structural integrity of perinuclear nuage particles during germ cell formation. In Penaeus vannamei (Whiteleg shrimp), this protein is Probable ATP-dependent RNA helicase vasa-like.